A 93-amino-acid polypeptide reads, in one-letter code: Large ribosomal subunit protein bL31 (93 aa).

The disordered stretch occupies residues 72 to 93; sequence VKTVSSNADNQKETTEELIKNK. Residues 81-93 show a composition bias toward basic and acidic residues; that stretch reads NQKETTEELIKNK.

The protein belongs to the bacterial ribosomal protein bL31 family. Type A subfamily. In terms of assembly, part of the 50S ribosomal subunit.

Its function is as follows. Binds the 23S rRNA. The protein is Large ribosomal subunit protein bL31 of Onion yellows phytoplasma (strain OY-M).